Reading from the N-terminus, the 167-residue chain is SsrA-binding protein (167 aa).

The disordered stretch occupies residues 144-167; it reads HDKRAADKEKQSKKEVRSAMAKYQ. The span at 146–160 shows a compositional bias: basic and acidic residues; that stretch reads KRAADKEKQSKKEVR.

Belongs to the SmpB family.

It localises to the cytoplasm. Its function is as follows. Required for rescue of stalled ribosomes mediated by trans-translation. Binds to transfer-messenger RNA (tmRNA), required for stable association of tmRNA with ribosomes. tmRNA and SmpB together mimic tRNA shape, replacing the anticodon stem-loop with SmpB. tmRNA is encoded by the ssrA gene; the 2 termini fold to resemble tRNA(Ala) and it encodes a 'tag peptide', a short internal open reading frame. During trans-translation Ala-aminoacylated tmRNA acts like a tRNA, entering the A-site of stalled ribosomes, displacing the stalled mRNA. The ribosome then switches to translate the ORF on the tmRNA; the nascent peptide is terminated with the 'tag peptide' encoded by the tmRNA and targeted for degradation. The ribosome is freed to recommence translation, which seems to be the essential function of trans-translation. This chain is SsrA-binding protein, found in Synechococcus sp. (strain CC9902).